A 345-amino-acid chain; its full sequence is Homeobox protein DBX1 (345 aa).

Disordered regions lie at residues Pro-55 to Ala-103 and Lys-241 to Ser-345. A DNA-binding region (homeobox) is located at residues Gly-182–Lys-241. Residues Asp-300–Leu-309 are compositionally biased toward basic and acidic residues. A compositionally biased stretch (acidic residues) spans Ser-330–Ser-345.

This sequence belongs to the H2.0 homeobox family.

The protein localises to the nucleus. Could have a role in patterning the central nervous system during embryogenesis. Has a key role in regulating the distinct phenotypic features that distinguish two major classes of ventral interneurons, V0 and V1 neurons. Regulates the transcription factor profile, neurotransmitter phenotype, intraspinal migratory path and axonal trajectory of V0 neurons, features that differentiate them from an adjacent set of V1 neurons. The polypeptide is Homeobox protein DBX1 (DBX1) (Bos taurus (Bovine)).